Consider the following 529-residue polypeptide: MSLIVSPFAVIAASAAAVAGVLFLIYAALKSGHRDASLPPGPPTVPLFGNELQIPKADAHFQFMKWADEYGGTFSLKRFKNTTIVISDRKLIKELVDKKSNVYSHRPASLVSHLITHSDHLLVMQYGDTWRMLRKTVHQYFMEPNCEKEHWKVQEAEAKQMLYDFLTAPQDHMLHPKRYSNSITNSLVFGIRSKTVHDEYMERLFYLMEKWSLVQELGATPPVDDFWLLRVLPQWMTGHWRHRALEVENLMQSLYTTVLDQVRDRRARGINRDSFMDRVLDRLDKVPLTESQLRFLGGVLMEGGSDTSSSLILTIIQAMTKFPAVQARAHAEIDRVVGADRSPAWSDAAQLPYINCIIKEAHRWRPVSPLGVPHAVAQDDEINGMVLPKGATVVLNVWAMHHDPRRWPEPERFEPARFEEFPALAPTYAASGEWDKRDHYGYGAGRRICPGIHLAERNLIIGVAKLLWAFEFTQPVGSYSDIDPESGASQGFLHCPKEYGCGVRLRAPEKRDTIVREFQEAQEVFARFD.

The helical transmembrane segment at 8-28 threads the bilayer; that stretch reads FAVIAASAAAVAGVLFLIYAA. N81 carries N-linked (GlcNAc...) asparagine glycosylation. C449 provides a ligand contact to heme.

This sequence belongs to the cytochrome P450 family. Heme is required as a cofactor.

It is found in the endoplasmic reticulum membrane. The enzyme catalyses 3-hydroxybenzyl alcohol + reduced [NADPH--hemoprotein reductase] + O2 = gentisyl alcohol + oxidized [NADPH--hemoprotein reductase] + H2O + H(+). Its pathway is secondary metabolite biosynthesis. Functionally, cytochrome P450 monooxygenase; part of the gene cluster that mediates the biosynthesis of aculins. The pathway begins with the synthesis of 6-methylsalicylic acid by the polyketide synthase (PKS) acuA via condensation of acetate and malonate units. The 6-methylsalicylic acid decarboxylase acuB then catalyzes the decarboxylation of 6-methylsalicylic acid to yield m-cresol (also known as 3-methylphenol). These first reactions occur in the cytosol. The intermediate m-cresol is then transported into the endoplasmic reticulum where the cytochrome P450 monooxygenase acuC converts it to m-hydroxybenzyl alcohol, which is further converted to gentisyl alcohol by the cytochrome P450 monooxygenase acuD. Gentisyl alcohol is further oxidized by the oxidoreductase acuE that probably catalyzes hydroxylation of the aromatic ring. The aromatic system might then be opened by oxidation through a Baeyer-Villiger type of oxidation, which could be catalyzed by acuF, with the carboxylic acid at C-1 subsequently reduced to an aldehyde by acuG. Subsequently, a hemiacetal is formed, before the dehydrogenase acuH would reduce the double bond between C-4 and C-6. Finally, keto-enol tautomerism results in formation of aculinic acid, which exists as two diastereomers (both R/S configurations at C-1) by non-enzymatic hemiacetal formation. The carboxypeptidase acuI could be involved in the linking of aculinic acid to an aculene A moiety produced by the aculene biosynthesis cluster and which leads to the production of aculin A. AcuI may also be involved in the attachment of proline to aculinic acid to form epi-aculins A and B. This chain is Cytochrome P450 monooxygenase acuD, found in Aspergillus aculeatus (strain ATCC 16872 / CBS 172.66 / WB 5094).